The sequence spans 348 residues: NADH-quinone oxidoreductase subunit H 1 (348 aa).

Transmembrane regions (helical) follow at residues 11 to 31, 83 to 103, 136 to 156, 172 to 192, 208 to 228, 268 to 288, 289 to 309, and 324 to 344; these read IYYISMVAKVLVVFVFVLLTV, FAFLIAPIIALVPAFIGFAVI, VGVLYILALASIGVYGIVLAG, SAQMISYELAAGLAIISVFML, GAWYCFKQPLAFILFFICSLA, MVTVCAVTTTLFLGGWHGPAF, LPGWAWFIAKVYFLIFVCMWI, and LGWKVFLPLTLVNIIVTGIVV.

The protein belongs to the complex I subunit 1 family. NDH-1 is composed of 14 different subunits. Subunits NuoA, H, J, K, L, M, N constitute the membrane sector of the complex.

The protein localises to the cell inner membrane. The enzyme catalyses a quinone + NADH + 5 H(+)(in) = a quinol + NAD(+) + 4 H(+)(out). Its function is as follows. NDH-1 shuttles electrons from NADH, via FMN and iron-sulfur (Fe-S) centers, to quinones in the respiratory chain. The immediate electron acceptor for the enzyme in this species is believed to be ubiquinone. Couples the redox reaction to proton translocation (for every two electrons transferred, four hydrogen ions are translocated across the cytoplasmic membrane), and thus conserves the redox energy in a proton gradient. This subunit may bind ubiquinone. This Geobacter sulfurreducens (strain ATCC 51573 / DSM 12127 / PCA) protein is NADH-quinone oxidoreductase subunit H 1.